The sequence spans 257 residues: Neuroendocrine secretory protein 55 (257 aa).

The first 46 residues, 1-46 (MDRRSRAQQWRRARHNYNDLCPPIGRRAATALLWLSCSIALLRALA), serve as a signal peptide directing secretion. The segment at 61-257 (SFLNAHHRSA…RKGPIPIRRH (197 aa)) is disordered. Low complexity predominate over residues 70–82 (AAAAAAAQVLPES). The segment covering 86–103 (ESDHEHEEVEPELARPEC) has biased composition (basic and acidic residues). Residues 104 to 139 (LEYDQDDYETETDSETEPESDIESETEIETEPETEP) show a composition bias toward acidic residues. Residues 200 to 211 (EPQRGPLDQDPR) are compositionally biased toward basic and acidic residues. The segment covering 227-237 (PRRCKTRRPAR) has biased composition (basic residues).

The protein belongs to the NESP55 family. In terms of processing, binds keratan sulfate chains. Post-translationally, may be proteolytically processed to give rise to a number of active peptides.

Its subcellular location is the cytoplasmic vesicle. The protein resides in the secretory vesicle. It localises to the secreted. The chain is Neuroendocrine secretory protein 55 from Mus musculus (Mouse).